Consider the following 461-residue polypeptide: MGKKAKWFSSVKKAFSPDSKKSKQKLAEGQNGVISNPPVVDNVRQSSSSPPPALAPREVRVAEVIVERNRDLSPPSTADAVNVTATDVPVVPSSSAPGVVRRATPTRFAGKSNEEAAAILIQTIFRGYLARRALRAMRGLVRLKLLMEGSVVKRQAANTLKCMQTLSRVQSQIRARRIRMSEENQARQKQLLQKHAKELAGLKNGDNWNDSIQSKEKVEANLLSKYEATMRRERALAYSYSHQQNWKNNSKSGNPMFMDPSNPTWGWSWLERWMAGRPLESSEKEQSNSNNDNAASVKGSINRNEAAKSLTRNGSTQPNTPSSARGTPRNKNSFFSPPTPSRLNQSSRKSNDDDSKSTISVLSERNRRHSIAGSSVRDDESLAGSPALPSYMVPTKSARARLKPQSPLGGTTQENEGFTDKASAKKRLSYPTSPALPKPRRFSAPPKVESGGVTVTNGAGS.

Positions 1 to 55 (MGKKAKWFSSVKKAFSPDSKKSKQKLAEGQNGVISNPPVVDNVRQSSSSPPPALA) are disordered. The IQ domain maps to 114-142 (EEAAAILIQTIFRGYLARRALRAMRGLVR). Residues 141 to 158 (VRLKLLMEGSVVKRQAAN) are calmodulin-binding. Residues 278-461 (PLESSEKEQS…GVTVTNGAGS (184 aa)) are disordered. Polar residues predominate over residues 310–345 (LTRNGSTQPNTPSSARGTPRNKNSFFSPPTPSRLNQ). The Nuclear localization signal motif lies at 425–432 (KKRLSYPT).

It belongs to the IQD family. In terms of assembly, binds to multiple calmodulin (CaM) in the presence of Ca(2+) and CaM-like proteins.

The protein resides in the nucleus. It localises to the cytoplasm. The protein localises to the cytoskeleton. In terms of biological role, may be involved in cooperative interactions with calmodulins or calmodulin-like proteins. Recruits calmodulin proteins to microtubules, thus being a potential scaffold in cellular signaling and trafficking. May associate with nucleic acids and regulate gene expression at the transcriptional or post-transcriptional level. This chain is Protein IQ-DOMAIN 2, found in Arabidopsis thaliana (Mouse-ear cress).